The chain runs to 273 residues: Small ribosomal subunit protein uS3 (273 aa).

One can recognise a KH type-2 domain in the interval 40 to 110; the sequence is IRNLFFVNYR…NLDLTINEIG (71 aa). Over residues 244–265 the composition is skewed to polar residues; it reads QVLSANKLTGSDVETSSIQALT. A disordered region spans residues 244–273; sequence QVLSANKLTGSDVETSSIQALTKPNKEDKQ.

The protein belongs to the universal ribosomal protein uS3 family. In terms of assembly, part of the 30S ribosomal subunit. Forms a tight complex with proteins S10 and S14.

In terms of biological role, binds the lower part of the 30S subunit head. Binds mRNA in the 70S ribosome, positioning it for translation. This chain is Small ribosomal subunit protein uS3, found in Mycoplasma pneumoniae (strain ATCC 29342 / M129 / Subtype 1) (Mycoplasmoides pneumoniae).